Here is a 98-residue protein sequence, read N- to C-terminus: uncharacterized protein (98 aa).

This is an uncharacterized protein from Homo sapiens (Human).